We begin with the raw amino-acid sequence, 203 residues long: Octanoyltransferase (203 aa).

The BPL/LPL catalytic domain occupies 32–203 (ISTPDEIWLV…LMHKIREIFS (172 aa)). Substrate-binding positions include 71–78 (RGGKITYH), 138–140 (SLG), and 151–153 (GMA). Cysteine 169 acts as the Acyl-thioester intermediate in catalysis.

This sequence belongs to the LipB family.

Its subcellular location is the cytoplasm. It carries out the reaction octanoyl-[ACP] + L-lysyl-[protein] = N(6)-octanoyl-L-lysyl-[protein] + holo-[ACP] + H(+). It participates in protein modification; protein lipoylation via endogenous pathway; protein N(6)-(lipoyl)lysine from octanoyl-[acyl-carrier-protein]: step 1/2. In terms of biological role, catalyzes the transfer of endogenously produced octanoic acid from octanoyl-acyl-carrier-protein onto the lipoyl domains of lipoate-dependent enzymes. Lipoyl-ACP can also act as a substrate although octanoyl-ACP is likely to be the physiological substrate. This is Octanoyltransferase from Buchnera aphidicola subsp. Baizongia pistaciae (strain Bp).